The primary structure comprises 161 residues: Endoribonuclease YbeY (161 aa).

3 residues coordinate Zn(2+): histidine 121, histidine 125, and histidine 131.

Belongs to the endoribonuclease YbeY family. Zn(2+) is required as a cofactor.

Its subcellular location is the cytoplasm. Functionally, single strand-specific metallo-endoribonuclease involved in late-stage 70S ribosome quality control and in maturation of the 3' terminus of the 16S rRNA. The polypeptide is Endoribonuclease YbeY (Xylella fastidiosa (strain M23)).